The sequence spans 538 residues: Phosphoenolpyruvate carboxykinase (ATP) (538 aa).

The substrate site is built by R61, Y195, and K201. Residues K201, H220, and 236 to 244 (GLSGTGKTT) contribute to the ATP site. The Mn(2+) site is built by K201 and H220. D257 is a binding site for Mn(2+). The ATP site is built by E285, R323, and T449. R323 is a binding site for substrate.

This sequence belongs to the phosphoenolpyruvate carboxykinase (ATP) family. Mn(2+) serves as cofactor.

The protein resides in the cytoplasm. The catalysed reaction is oxaloacetate + ATP = phosphoenolpyruvate + ADP + CO2. It functions in the pathway carbohydrate biosynthesis; gluconeogenesis. In terms of biological role, involved in the gluconeogenesis. Catalyzes the conversion of oxaloacetate (OAA) to phosphoenolpyruvate (PEP) through direct phosphoryl transfer between the nucleoside triphosphate and OAA. In Nitrobacter winogradskyi (strain ATCC 25391 / DSM 10237 / CIP 104748 / NCIMB 11846 / Nb-255), this protein is Phosphoenolpyruvate carboxykinase (ATP).